The chain runs to 318 residues: Protoheme IX farnesyltransferase (318 aa).

A run of 9 helical transmembrane segments spans residues Ile29–Val49, Pro51–Ile71, Leu102–Leu122, Leu123–Leu143, Ile151–Gly171, Leu179–Ile199, Ala219–Val239, Pro241–Ile261, and Leu280–Leu300.

This sequence belongs to the UbiA prenyltransferase family. Protoheme IX farnesyltransferase subfamily.

The protein resides in the cell inner membrane. It carries out the reaction heme b + (2E,6E)-farnesyl diphosphate + H2O = Fe(II)-heme o + diphosphate. The protein operates within porphyrin-containing compound metabolism; heme O biosynthesis; heme O from protoheme: step 1/1. Converts heme B (protoheme IX) to heme O by substitution of the vinyl group on carbon 2 of heme B porphyrin ring with a hydroxyethyl farnesyl side group. This chain is Protoheme IX farnesyltransferase, found in Nostoc sp. (strain PCC 7120 / SAG 25.82 / UTEX 2576).